Consider the following 95-residue polypeptide: MFWIFVMAKPASLSIELDSDLDRRLSEIAEGMDQPKTAIIERALRDFVELRDWQDAAIDEGLRAAEEGRVFDHDKVGEWIDSWGTPNERPMPSRD.

Its function is as follows. Antitoxin component of a non-functional type II toxin-antitoxin (TA system). Does not neutralize the effect of any of the RelE or ParE toxins. The sequence is that of Orphan antitoxin ParD2 (parD2) from Caulobacter vibrioides (strain ATCC 19089 / CIP 103742 / CB 15) (Caulobacter crescentus).